The following is a 278-amino-acid chain: Polyamine aminopropyltransferase (278 aa).

The region spanning 5-238 is the PABS domain; sequence ELWFTEQQTP…GLWSFTLGSK (234 aa). S-methyl-5'-thioadenosine is bound at residue Gln34. His65 and Asp89 together coordinate spermidine. S-methyl-5'-thioadenosine is bound by residues Glu109 and 140–141; that span reads DG. Catalysis depends on Asp158, which acts as the Proton acceptor. Spermidine is bound at residue 158–161; it reads DSTD. Pro165 is a binding site for S-methyl-5'-thioadenosine.

This sequence belongs to the spermidine/spermine synthase family. As to quaternary structure, homodimer or homotetramer.

Its subcellular location is the cytoplasm. It carries out the reaction S-adenosyl 3-(methylsulfanyl)propylamine + putrescine = S-methyl-5'-thioadenosine + spermidine + H(+). It functions in the pathway amine and polyamine biosynthesis; spermidine biosynthesis; spermidine from putrescine: step 1/1. Catalyzes the irreversible transfer of a propylamine group from the amino donor S-adenosylmethioninamine (decarboxy-AdoMet) to putrescine (1,4-diaminobutane) to yield spermidine. This chain is Polyamine aminopropyltransferase, found in Caldicellulosiruptor bescii (strain ATCC BAA-1888 / DSM 6725 / KCTC 15123 / Z-1320) (Anaerocellum thermophilum).